A 275-amino-acid polypeptide reads, in one-letter code: Putative ribonuclease-like protein YfkH (275 aa).

6 helical membrane-spanning segments follow: residues 23-43, 83-103, 126-146, 172-192, 199-219, and 235-255; these read LAYF…TLTA, LLSF…NAIV, IFLT…PVFG, WGVS…IAPN, FVMP…TLFS, and IGGI…IILG.

The protein localises to the cell membrane. This chain is Putative ribonuclease-like protein YfkH (yfkH), found in Bacillus subtilis (strain 168).